We begin with the raw amino-acid sequence, 269 residues long: MTALPRYAVFGNPVAHSKSPQIHRQFALQEGVEIEYGRICADIGSFAQAVSTFFGTGGCGANVTVPFKQEAFDLADEHSERASAAGAVNTLILLENGKLRGDNTDGLGLVGDIVKVQNTEVEGKNILLLGAGGAVRGVIPVLLAQNPARIVIANRTRAKAEEVAARFGIEAVPMADLNGGFDIIINGTSGGLNGQIPDIPPDIFQNCALAYDMVYGEAAKPFLDFARQSGAKQTADGLGMLVGQAAASYALWRGFKPDIRPVIEYMKAL.

Shikimate is bound by residues 17–19 and Thr64; that span reads SKS. The active-site Proton acceptor is Lys68. Glu80 lines the NADP(+) pocket. Residues Asn89 and Asp105 each coordinate shikimate. NADP(+) contacts are provided by residues 130–134, 154–159, and Met213; these read GAGGA and NRTRAK. Tyr215 lines the shikimate pocket. Gly237 is a binding site for NADP(+).

It belongs to the shikimate dehydrogenase family. In terms of assembly, homodimer.

It catalyses the reaction shikimate + NADP(+) = 3-dehydroshikimate + NADPH + H(+). The protein operates within metabolic intermediate biosynthesis; chorismate biosynthesis; chorismate from D-erythrose 4-phosphate and phosphoenolpyruvate: step 4/7. Functionally, involved in the biosynthesis of the chorismate, which leads to the biosynthesis of aromatic amino acids. Catalyzes the reversible NADPH linked reduction of 3-dehydroshikimate (DHSA) to yield shikimate (SA). This is Shikimate dehydrogenase (NADP(+)) from Neisseria lactamica.